A 141-amino-acid polypeptide reads, in one-letter code: Large ribosomal subunit protein uL11 (141 aa).

It belongs to the universal ribosomal protein uL11 family. As to quaternary structure, part of the ribosomal stalk of the 50S ribosomal subunit. Interacts with L10 and the large rRNA to form the base of the stalk. L10 forms an elongated spine to which L12 dimers bind in a sequential fashion forming a multimeric L10(L12)X complex. Post-translationally, one or more lysine residues are methylated.

Its function is as follows. Forms part of the ribosomal stalk which helps the ribosome interact with GTP-bound translation factors. This is Large ribosomal subunit protein uL11 from Chlamydia pneumoniae (Chlamydophila pneumoniae).